The sequence spans 391 residues: Protein-glutamate methylesterase/protein-glutamine glutaminase (391 aa).

Positions lysine 4–leucine 121 constitute a Response regulatory domain. Aspartate 55 carries the 4-aspartylphosphate modification. Residues serine 197–glycine 391 form the CheB-type methylesterase domain. Active-site residues include serine 209, histidine 236, and aspartate 333.

The protein belongs to the CheB family. In terms of processing, phosphorylated by CheA. Phosphorylation of the N-terminal regulatory domain activates the methylesterase activity.

The protein localises to the cytoplasm. It catalyses the reaction [protein]-L-glutamate 5-O-methyl ester + H2O = L-glutamyl-[protein] + methanol + H(+). The enzyme catalyses L-glutaminyl-[protein] + H2O = L-glutamyl-[protein] + NH4(+). In terms of biological role, involved in chemotaxis. Part of a chemotaxis signal transduction system that modulates chemotaxis in response to various stimuli. Catalyzes the demethylation of specific methylglutamate residues introduced into the chemoreceptors (methyl-accepting chemotaxis proteins or MCP) by CheR. Also mediates the irreversible deamidation of specific glutamine residues to glutamic acid. This chain is Protein-glutamate methylesterase/protein-glutamine glutaminase, found in Pseudoalteromonas translucida (strain TAC 125).